The primary structure comprises 182 residues: ATP-dependent protease subunit HslV (182 aa).

The active site involves Thr-7. Positions 162, 165, and 168 each coordinate Na(+).

The protein belongs to the peptidase T1B family. HslV subfamily. In terms of assembly, a double ring-shaped homohexamer of HslV is capped on each side by a ring-shaped HslU homohexamer. The assembly of the HslU/HslV complex is dependent on binding of ATP.

The protein resides in the cytoplasm. The catalysed reaction is ATP-dependent cleavage of peptide bonds with broad specificity.. Its activity is regulated as follows. Allosterically activated by HslU binding. Functionally, protease subunit of a proteasome-like degradation complex believed to be a general protein degrading machinery. This is ATP-dependent protease subunit HslV from Legionella pneumophila (strain Lens).